A 105-amino-acid polypeptide reads, in one-letter code: Met repressor (105 aa).

This sequence belongs to the MetJ family. In terms of assembly, homodimer.

It is found in the cytoplasm. In terms of biological role, this regulatory protein, when combined with SAM (S-adenosylmethionine) represses the expression of the methionine regulon and of enzymes involved in SAM synthesis. This is Met repressor from Proteus mirabilis (strain HI4320).